The following is a 375-amino-acid chain: Chaperone protein DnaJ (375 aa).

The J domain occupies 5–70; sequence DFYETLGVAK…QKRAAYDRYG (66 aa). The CR-type zinc finger occupies 136–214; sequence GKTAQIRVPT…CHGQGRVTEE (79 aa). Zn(2+) is bound by residues Cys-149, Cys-152, Cys-166, Cys-169, Cys-188, Cys-191, Cys-202, and Cys-205. 4 CXXCXGXG motif repeats span residues 149 to 156, 166 to 173, 188 to 195, and 202 to 209; these read CDVCSGSG, CGTCQGTG, CPTCHGRG, and CPKCHGQG.

The protein belongs to the DnaJ family. In terms of assembly, homodimer. It depends on Zn(2+) as a cofactor.

It is found in the cytoplasm. Participates actively in the response to hyperosmotic and heat shock by preventing the aggregation of stress-denatured proteins and by disaggregating proteins, also in an autonomous, DnaK-independent fashion. Unfolded proteins bind initially to DnaJ; upon interaction with the DnaJ-bound protein, DnaK hydrolyzes its bound ATP, resulting in the formation of a stable complex. GrpE releases ADP from DnaK; ATP binding to DnaK triggers the release of the substrate protein, thus completing the reaction cycle. Several rounds of ATP-dependent interactions between DnaJ, DnaK and GrpE are required for fully efficient folding. Also involved, together with DnaK and GrpE, in the DNA replication of plasmids through activation of initiation proteins. The chain is Chaperone protein DnaJ from Rhizobium johnstonii (strain DSM 114642 / LMG 32736 / 3841) (Rhizobium leguminosarum bv. viciae).